The primary structure comprises 116 residues: ATP-dependent Clp protease adapter protein ClpS (116 aa).

Residues 1–11 (MRRFNTIMQGK) are compositionally biased toward polar residues. The segment at 1-23 (MRRFNTIMQGKTNGGNGPESGTV) is disordered.

It belongs to the ClpS family. Binds to the N-terminal domain of the chaperone ClpA.

In terms of biological role, involved in the modulation of the specificity of the ClpAP-mediated ATP-dependent protein degradation. The chain is ATP-dependent Clp protease adapter protein ClpS from Brucella melitensis biotype 2 (strain ATCC 23457).